The following is a 324-amino-acid chain: Ferrochelatase (324 aa).

Fe cation-binding residues include His-197 and Glu-278.

Belongs to the ferrochelatase family.

It is found in the cytoplasm. It catalyses the reaction heme b + 2 H(+) = protoporphyrin IX + Fe(2+). It participates in porphyrin-containing compound metabolism; protoheme biosynthesis; protoheme from protoporphyrin-IX: step 1/1. Its function is as follows. Catalyzes the ferrous insertion into protoporphyrin IX. The polypeptide is Ferrochelatase (Aeromonas hydrophila subsp. hydrophila (strain ATCC 7966 / DSM 30187 / BCRC 13018 / CCUG 14551 / JCM 1027 / KCTC 2358 / NCIMB 9240 / NCTC 8049)).